A 445-amino-acid polypeptide reads, in one-letter code: Phosphoglucosamine mutase (445 aa).

Residue Ser-100 is the Phosphoserine intermediate of the active site. Ser-100, Asp-240, Asp-242, and Asp-244 together coordinate Mg(2+). Ser-100 carries the post-translational modification Phosphoserine.

It belongs to the phosphohexose mutase family. It depends on Mg(2+) as a cofactor. Activated by phosphorylation.

It carries out the reaction alpha-D-glucosamine 1-phosphate = D-glucosamine 6-phosphate. Its function is as follows. Catalyzes the conversion of glucosamine-6-phosphate to glucosamine-1-phosphate. This chain is Phosphoglucosamine mutase, found in Pelotomaculum thermopropionicum (strain DSM 13744 / JCM 10971 / SI).